A 365-amino-acid chain; its full sequence is Aminomethyltransferase (365 aa).

Belongs to the GcvT family. In terms of assembly, the glycine cleavage system is composed of four proteins: P, T, L and H.

The enzyme catalyses N(6)-[(R)-S(8)-aminomethyldihydrolipoyl]-L-lysyl-[protein] + (6S)-5,6,7,8-tetrahydrofolate = N(6)-[(R)-dihydrolipoyl]-L-lysyl-[protein] + (6R)-5,10-methylene-5,6,7,8-tetrahydrofolate + NH4(+). Functionally, the glycine cleavage system catalyzes the degradation of glycine. The protein is Aminomethyltransferase of Natranaerobius thermophilus (strain ATCC BAA-1301 / DSM 18059 / JW/NM-WN-LF).